A 350-amino-acid polypeptide reads, in one-letter code: Induced myeloid leukemia cell differentiation protein Mcl-1 homolog (350 aa).

Glycyl lysine isopeptide (Lys-Gly) (interchain with G-Cter in ubiquitin) cross-links involve residues K5 and K40. Positions 104 to 175 are PEST-like; it reads CASPPEEMEG…PAEEEEDELF (72 aa). S121 bears the Phosphoserine mark. A Glycyl lysine isopeptide (Lys-Gly) (interchain with G-Cter in ubiquitin) cross-link involves residue K136. Residues 148 to 170 form a disordered region; that stretch reads GEASSGPGTDGSLPSTPPPAEEE. S159 is modified (phosphoserine; by GSK3-alpha and GSK3-beta). S162 carries the phosphoserine modification. T163 bears the Phosphothreonine; by MAPK mark. Residues K194 and K197 each participate in a glycyl lysine isopeptide (Lys-Gly) (interchain with G-Cter in ubiquitin) cross-link. The BH3 signature appears at 209-223; it reads ALETLRRVGDGVQRN. The BH1 signature appears at 252-272; it reads HVFSDGVTNWGRIVTLISFGA. A BH2 motif is present at residues 304–319; sequence DWLVKQRGWDGFVEFF. The helical transmembrane segment at 328-348 threads the bilayer; it reads IRNVLLAFAGVAGVGAGLAYL.

This sequence belongs to the Bcl-2 family. In terms of assembly, interacts with HIF3A (via C-terminus domain). Interacts with BOK, BIK, BAX, BAK1, and TPT1. Interacts with unphosphorylated BAD. Interacts with BMF, BBC3 and PMAIP1. Interacts with BOP. Interacts with BCL2L11; may sequester BCL2L11 to prevent its pro-apoptotic activity. Interacts with GIMAP5 and HSPA8/HSC70; the interaction between HSPA8 and MCL1 is impaired in the absence of GIMAP5. Cleaved by CASP3 during apoptosis, yielding a pro-apoptotic C-terminal fragment. Post-translationally, rapidly degraded in the absence of phosphorylation in the PEST region. In terms of processing, phosphorylated on Ser-159, by GSK3, in response to IL3/interleukin-3 withdrawal. Phosphorylation at Ser-159 induces ubiquitination and proteasomal degradation, abrogating the anti-apoptotic activity. Treatment with taxol or okadaic acid induces phosphorylation on additional sites. Ubiquitinated. Ubiquitination is induced by phosphorylation at Ser-159. Deubiquitinated by USP20; leading to increased stability.

It localises to the membrane. Its subcellular location is the cytoplasm. It is found in the mitochondrion. The protein resides in the nucleus. The protein localises to the nucleoplasm. Involved in the regulation of apoptosis versus cell survival, and in the maintenance of viability but not of proliferation. Mediates its effects by interactions with a number of other regulators of apoptosis. In Felis catus (Cat), this protein is Induced myeloid leukemia cell differentiation protein Mcl-1 homolog (MCL1).